The following is a 128-amino-acid chain: Large ribosomal subunit protein bL17 (128 aa).

It belongs to the bacterial ribosomal protein bL17 family. As to quaternary structure, part of the 50S ribosomal subunit. Contacts protein L32.

The protein is Large ribosomal subunit protein bL17 of Pseudomonas fluorescens (strain Pf0-1).